The sequence spans 473 residues: H(+)/Cl(-) exchange transporter ClcA (473 aa).

Topologically, residues 1 to 32 are cytoplasmic; it reads MNTDTPTFEAQQVVRLRRGDLIRRLLQRDKTP. The chain crosses the membrane as a helical span at residues 33-69; that stretch reads LAILLTAAVVGTVTGLIGVAFEKAVTWVQNLRIGALV. The Periplasmic segment spans residues 70 to 76; that stretch reads QTADYAI. Residues 77–100 traverse the membrane as a helical segment; the sequence is LVWPLAFILSALLAMVGYFLVRKF. Residues 101–108 are Cytoplasmic-facing; it reads APEAGGSG. A Selectivity filter part_1 motif is present at residues 106 to 110; that stretch reads GSGIP. Position 107 (Ser-107) interacts with chloride. Positions 109–116 form an intramembrane region, helical; sequence IPEIEGAL. Residues 117–123 are Cytoplasmic-facing; it reads EELRPVR. A helical transmembrane segment spans residues 124-141; sequence WWRVLPVKFVGGMGTLGA. Over 142–147 the chain is Periplasmic; it reads GMVLGR. The Selectivity filter part_2 motif lies at 146–150; sequence GREGP. Residues 148 to 166 traverse the membrane as a helical segment; that stretch reads EGPTVQIGGNIGRMVLDLF. Topologically, residues 167 to 176 are cytoplasmic; the sequence is RMRSAEARHT. 2 consecutive intramembrane regions (helical) follow at residues 177–189 and 193–201; these read LLATGAAAGLSAA and PLAGILFII. Over 202-214 the chain is Cytoplasmic; that stretch reads EEMRPQFRYNLIS. A helical membrane pass occupies residues 215-232; sequence IKAVFTGVIMSSIVFRIF. At 233–252 the chain is on the periplasmic side; the sequence is NGEAPIIEVGKLSNAPVNTL. Residues 253 to 281 traverse the membrane as a helical segment; the sequence is WLYLILGMIFGCVGPLFNHLVLRTQDMFQ. The Cytoplasmic portion of the chain corresponds to 282-287; it reads RFHGGE. A helical membrane pass occupies residues 288–309; it reads IKKWVLMGGAIGGLCGILGLIE. Residues 310-329 are Periplasmic-facing; it reads PEAAGGGFNLIPIAAAGNYS. A helical membrane pass occupies residues 330–349; the sequence is VGLLLFIFIARVLTTLLCFS. Residues 350 to 354 are Cytoplasmic-facing; the sequence is SGAPG. The Selectivity filter part_3 signature appears at 355–359; it reads GIFAP. Residues 355-376 form a helical membrane-spanning segment; the sequence is GIFAPMLALGTLLGTAFGMAAA. Ile-356 and Phe-357 together coordinate chloride. Topologically, residues 377 to 386 are periplasmic; the sequence is ACFPQYHLEA. The helical intramembrane region spans 387-401; it reads GTFAIAGMGALLAAS. Residues 402–404 constitute an intramembrane region (note=Loop between two helices); that stretch reads VRA. An intramembrane region (helical) is located at residues 405 to 416; sequence PLTGIVLVLEMT. The note=Loop between two helices intramembrane region spans 417–421; that stretch reads DNYQL. Residues 422-438 form a helical membrane-spanning segment; sequence ILPMIITCLGATLLAQF. The Cytoplasmic portion of the chain corresponds to 439 to 473; sequence MGGKPLYSTILARTLAKQDAEQAAKSQRSVAGENT. Tyr-445 is a binding site for chloride.

The protein belongs to the chloride channel (TC 2.A.49) family. ClcA subfamily. In terms of assembly, homodimer.

Its subcellular location is the cell inner membrane. The enzyme catalyses 2 chloride(in) + H(+)(out) = 2 chloride(out) + H(+)(in). In terms of biological role, proton-coupled chloride transporter. Functions as antiport system and exchanges two chloride ions for 1 proton. Probably acts as an electrical shunt for an outwardly-directed proton pump that is linked to amino acid decarboxylation, as part of the extreme acid resistance (XAR) response. The sequence is that of H(+)/Cl(-) exchange transporter ClcA from Citrobacter koseri (strain ATCC BAA-895 / CDC 4225-83 / SGSC4696).